A 647-amino-acid chain; its full sequence is UvrABC system protein C (647 aa).

Positions 16–95 (VEPGVYRFRD…IKEFDPRFNV (80 aa)) constitute a GIY-YIG domain. In terms of domain architecture, UVR spans 208–243 (DRYARELEQQMNAAAENLDFERAARLRDDRSALKRA).

It belongs to the UvrC family. In terms of assembly, interacts with UvrB in an incision complex.

It localises to the cytoplasm. In terms of biological role, the UvrABC repair system catalyzes the recognition and processing of DNA lesions. UvrC both incises the 5' and 3' sides of the lesion. The N-terminal half is responsible for the 3' incision and the C-terminal half is responsible for the 5' incision. The polypeptide is UvrABC system protein C (Mycobacterium marinum (strain ATCC BAA-535 / M)).